The sequence spans 352 residues: Phosphate acyltransferase (352 aa).

The segment covering 328 to 339 (ESFPGDAREREG) has biased composition (basic and acidic residues). The segment at 328-352 (ESFPGDAREREGAPAPDAGTERVAS) is disordered.

It belongs to the PlsX family. As to quaternary structure, homodimer. Probably interacts with PlsY.

The protein localises to the cytoplasm. It catalyses the reaction a fatty acyl-[ACP] + phosphate = an acyl phosphate + holo-[ACP]. Its pathway is lipid metabolism; phospholipid metabolism. In terms of biological role, catalyzes the reversible formation of acyl-phosphate (acyl-PO(4)) from acyl-[acyl-carrier-protein] (acyl-ACP). This enzyme utilizes acyl-ACP as fatty acyl donor, but not acyl-CoA. This is Phosphate acyltransferase from Citrifermentans bemidjiense (strain ATCC BAA-1014 / DSM 16622 / JCM 12645 / Bem) (Geobacter bemidjiensis).